Consider the following 247-residue polypeptide: Fumarate reductase iron-sulfur subunit (247 aa).

Tyrosine 12 serves as a coordination point for a menaquinone. The 2Fe-2S ferredoxin-type domain maps to 14 to 94 (PEIESAPTFQ…PGPVRVEPMR (81 aa)). [2Fe-2S] cluster contacts are provided by cysteine 56, cysteine 61, and cysteine 76. Positions 140–169 (LDAFKQFSMCINCMLCYSACPVYALDPDFL) constitute a 4Fe-4S ferredoxin-type domain. The [4Fe-4S] cluster site is built by cysteine 149, cysteine 152, and cysteine 155. The [3Fe-4S] cluster site is built by cysteine 159, cysteine 205, and cysteine 211. Residue cysteine 215 coordinates [4Fe-4S] cluster. Position 226 to 229 (226 to 229 (QRYK)) interacts with a menaquinone.

It belongs to the succinate dehydrogenase/fumarate reductase iron-sulfur protein family. Fumarate dehydrogenase forms part of an enzyme complex containing four subunits: a flavoprotein, an iron-sulfur, and two hydrophobic anchor proteins. [2Fe-2S] cluster serves as cofactor. It depends on [3Fe-4S] cluster as a cofactor. Requires [4Fe-4S] cluster as cofactor.

Its subcellular location is the cell membrane. The catalysed reaction is a quinone + succinate = fumarate + a quinol. The enzyme catalyses a menaquinone + succinate = a menaquinol + fumarate. This chain is Fumarate reductase iron-sulfur subunit (frdB), found in Mycobacterium tuberculosis (strain CDC 1551 / Oshkosh).